A 363-amino-acid polypeptide reads, in one-letter code: MRTIDSSSKKDGFRMPGEFEKHAGCYIIWPERPDNWRLGAKPAQKAFVDVATAISHFEPVTVVASSSQYVNARYMLSDEIRVVEMDNDDAWVRDSGPTFVVNDSGDVRGVDWSFNSWGGLVDGLYFPWDKDDQVAQKICELERKDRYRLADFVLEGGSIHVDGEGTLVTTEECLLSEGRNPQLSKQQIEMVLKEYLNLEKIIWLKRGIYLDETNGHVDNIFNYVRPGVVALAWTDDETDPQYEISKECFDILSNETDAKGRKLEVHKINVPKPILITDEESKGVDAVEGTLPREEGDRLAASYINYYTANGGVIFPLFGDPNDELAREKLQQLYPNCEVVGVKAREILLGGGNIHCITQQVPR.

Cys356 (amidino-cysteine intermediate) is an active-site residue.

Belongs to the agmatine deiminase family.

The catalysed reaction is agmatine + H2O = N-carbamoylputrescine + NH4(+). This is Putative agmatine deiminase 1 from Listeria monocytogenes serovar 1/2a (strain ATCC BAA-679 / EGD-e).